The sequence spans 652 residues: DNA ligase (652 aa).

Residues 29–33 (DSEYD), 78–79 (SL), and E107 each bind NAD(+). K109 serves as the catalytic N6-AMP-lysine intermediate. NAD(+) contacts are provided by R130, E164, K278, and K302. Residues C395, C398, C413, and C418 each contribute to the Zn(2+) site. One can recognise a BRCT domain in the interval 577-652 (VADAALSGLT…VRDEAWLESL (76 aa)).

Belongs to the NAD-dependent DNA ligase family. LigA subfamily. Requires Mg(2+) as cofactor. The cofactor is Mn(2+).

It carries out the reaction NAD(+) + (deoxyribonucleotide)n-3'-hydroxyl + 5'-phospho-(deoxyribonucleotide)m = (deoxyribonucleotide)n+m + AMP + beta-nicotinamide D-nucleotide.. Its function is as follows. DNA ligase that catalyzes the formation of phosphodiester linkages between 5'-phosphoryl and 3'-hydroxyl groups in double-stranded DNA using NAD as a coenzyme and as the energy source for the reaction. It is essential for DNA replication and repair of damaged DNA. This chain is DNA ligase, found in Streptococcus pneumoniae serotype 2 (strain D39 / NCTC 7466).